Reading from the N-terminus, the 218-residue chain is Ribonuclease T (218 aa).

The 175-residue stretch at V20 to F194 folds into the Exonuclease domain. Mg(2+) contacts are provided by D23, E25, H181, and D186. The Proton donor/acceptor role is filled by H181.

Belongs to the RNase T family. As to quaternary structure, homodimer. Mg(2+) serves as cofactor.

Its function is as follows. Trims short 3' overhangs of a variety of RNA species, leaving a one or two nucleotide 3' overhang. Responsible for the end-turnover of tRNA: specifically removes the terminal AMP residue from uncharged tRNA (tRNA-C-C-A). Also appears to be involved in tRNA biosynthesis. The polypeptide is Ribonuclease T (Baumannia cicadellinicola subsp. Homalodisca coagulata).